A 70-amino-acid chain; its full sequence is Large ribosomal subunit protein bL31 (70 aa).

The Zn(2+) site is built by C16, C18, C36, and C39.

This sequence belongs to the bacterial ribosomal protein bL31 family. Type A subfamily. In terms of assembly, part of the 50S ribosomal subunit. Requires Zn(2+) as cofactor.

Its function is as follows. Binds the 23S rRNA. The protein is Large ribosomal subunit protein bL31 of Tolumonas auensis (strain DSM 9187 / NBRC 110442 / TA 4).